Reading from the N-terminus, the 246-residue chain is Large ribosomal subunit protein uL2 (246 aa).

The tract at residues 196 to 226 (MSPYAHPHGGGSHQKGGTPVPKTAPPGQKVG) is disordered.

This sequence belongs to the universal ribosomal protein uL2 family. Part of the 50S ribosomal subunit. Forms a bridge to the 30S subunit in the 70S ribosome.

One of the primary rRNA binding proteins. Required for association of the 30S and 50S subunits to form the 70S ribosome, for tRNA binding and peptide bond formation. It has been suggested to have peptidyltransferase activity; this is somewhat controversial. Makes several contacts with the 16S rRNA in the 70S ribosome. The protein is Large ribosomal subunit protein uL2 of Pyrobaculum arsenaticum (strain DSM 13514 / JCM 11321 / PZ6).